The following is a 202-amino-acid chain: Small ribosomal subunit protein uS4 (202 aa).

The disordered stretch occupies residues 15 to 43; sequence LGDLPGLTRKAAKRSNPPGQHGNARRKRS. Residues 90–152 enclose the S4 RNA-binding domain; sequence GRLDNVCFRL…KGSKKLAEGN (63 aa).

It belongs to the universal ribosomal protein uS4 family. Part of the 30S ribosomal subunit. Contacts protein S5. The interaction surface between S4 and S5 is involved in control of translational fidelity.

Functionally, one of the primary rRNA binding proteins, it binds directly to 16S rRNA where it nucleates assembly of the body of the 30S subunit. With S5 and S12 plays an important role in translational accuracy. This chain is Small ribosomal subunit protein uS4, found in Prochlorococcus marinus (strain SARG / CCMP1375 / SS120).